Reading from the N-terminus, the 137-residue chain is Transcription antitermination protein NusB (137 aa).

The protein belongs to the NusB family.

Involved in transcription antitermination. Required for transcription of ribosomal RNA (rRNA) genes. Binds specifically to the boxA antiterminator sequence of the ribosomal RNA (rrn) operons. In Clavibacter sepedonicus (Clavibacter michiganensis subsp. sepedonicus), this protein is Transcription antitermination protein NusB.